Consider the following 154-residue polypeptide: MGLSDGEWQSVLNVWGKVEADLAGHGQEILIRLFTAHPETLEKFDKFKNLKTPDEMKASEDLKKHGVTVLTALGGILKKKGQHEAEIKPLAQSHATKHKIPVKYLEFISGAIIHVLQSKHPGDFGADAQGAMSKALELFRNDIAAKYKELGFQG.

A Globin domain is found at 2-148; it reads GLSDGEWQSV…FRNDIAAKYK (147 aa). Residue S4 is modified to Phosphoserine. H65 contacts nitrite. H65 is an O2 binding site. Phosphothreonine is present on T68. Position 94 (H94) interacts with heme b.

The protein belongs to the globin family. Monomeric.

The protein localises to the cytoplasm. It localises to the sarcoplasm. It carries out the reaction Fe(III)-heme b-[protein] + nitric oxide + H2O = Fe(II)-heme b-[protein] + nitrite + 2 H(+). It catalyses the reaction H2O2 + AH2 = A + 2 H2O. Functionally, monomeric heme protein which primary function is to store oxygen and facilitate its diffusion within muscle tissues. Reversibly binds oxygen through a pentacoordinated heme iron and enables its timely and efficient release as needed during periods of heightened demand. Depending on the oxidative conditions of tissues and cells, and in addition to its ability to bind oxygen, it also has a nitrite reductase activity whereby it regulates the production of bioactive nitric oxide. Under stress conditions, like hypoxia and anoxia, it also protects cells against reactive oxygen species thanks to its pseudoperoxidase activity. The chain is Myoglobin (MB) from Nycticebus coucang (Slow loris).